The sequence spans 244 residues: MVAKVVERQMGVALWRQIADRIRLAISNGDYDATGMVPPETALAAEFGVNRHTVRSALAALAEEGLVRAVQGRGTMIERKDRVSYPISRRTRFSQGLGRQVREIGTELLGHAQVPASGEIATALGVPPGTPLIELSTVSSGDGRPLSTAVSYYPAERFARMAEEYAQLGSVTKAFAAHGLDDYVRVSTEIVARHAEAEELSLLKLSPGAIVMETQSVNADLEGRPVEYSRTRFAADRVKLRIET.

The HTH gntR-type domain maps to 12-80; it reads VALWRQIADR…QGRGTMIERK (69 aa). A DNA-binding region (H-T-H motif) is located at residues 40 to 59; that stretch reads ETALAAEFGVNRHTVRSALA.

This is an uncharacterized protein from Rhizobium meliloti (strain 1021) (Ensifer meliloti).